A 126-amino-acid polypeptide reads, in one-letter code: Protein ApaG (126 aa).

The region spanning 2–126 (DVIQPCIKIQ…FRLAIPNVLN (125 aa)) is the ApaG domain.

The chain is Protein ApaG from Vibrio campbellii (strain ATCC BAA-1116).